The primary structure comprises 323 residues: SURF1-like protein (323 aa).

Positions 57-71 (DAPKSRENREKDGGK) are enriched in basic and acidic residues. Positions 57–76 (DAPKSRENREKDGGKSKKSK) are disordered. 2 helical membrane-spanning segments follow: residues 81–101 (WSTG…LGIW) and 299–319 (HLNY…MWIH).

It belongs to the SURF1 family.

It is found in the mitochondrion inner membrane. Probably involved in the biogenesis of the COX complex. The chain is SURF1-like protein (sft-1) from Caenorhabditis elegans.